The primary structure comprises 227 residues: Adapter protein MecA 1 (227 aa).

The protein belongs to the MecA family. As to quaternary structure, homodimer.

Functionally, enables the recognition and targeting of unfolded and aggregated proteins to the ClpC protease or to other proteins involved in proteolysis. Acts negatively in the development of competence by binding ComK and recruiting it to the ClpCP protease. When overexpressed, inhibits sporulation. Also involved in Spx degradation by ClpC. The protein is Adapter protein MecA 1 (mecA1) of Bacillus cereus (strain ATCC 14579 / DSM 31 / CCUG 7414 / JCM 2152 / NBRC 15305 / NCIMB 9373 / NCTC 2599 / NRRL B-3711).